The following is a 284-amino-acid chain: NADH-cytochrome b5 reductase 1 (284 aa).

Residues P8–V28 form a helical membrane-spanning segment. Positions D41–T144 constitute an FAD-binding FR-type domain. Residues D124 to G139 and S150 to L182 each bind FAD.

This sequence belongs to the flavoprotein pyridine nucleotide cytochrome reductase family. Monomer. Component of the 2-(3-amino-3-carboxypropyl)histidine synthase complex composed of DPH1, DPH2, DPH3 and a NADH-dependent reductase, predominantly CBR1. Requires FAD as cofactor.

It localises to the mitochondrion outer membrane. The catalysed reaction is 2 Fe(III)-[cytochrome b5] + NADH = 2 Fe(II)-[cytochrome b5] + NAD(+) + H(+). The enzyme catalyses 2 Fe(3+)-[Dph3] + NADH = 2 Fe(2+)-[Dph3] + NAD(+) + H(+). It participates in protein modification; peptidyl-diphthamide biosynthesis. Its function is as follows. NADH-dependent reductase for DPH3 and cytochrome b5. Required for the first step of diphthamide biosynthesis, a post-translational modification of histidine which occurs in elongation factor 2. DPH1 and DPH2 transfer a 3-amino-3-carboxypropyl (ACP) group from S-adenosyl-L-methionine (SAM) to a histidine residue, the reaction is assisted by a reduction system comprising DPH3 and a NADH-dependent reductase, predominantly CBR1. By reducing DPH3, also involved in the formation of the tRNA wobble base modification mcm5s 2U (5-methoxycarbonylmethyl-2-thiouridine), mediated by the elongator complex. The cytochrome b5/NADH cytochrome b5 reductase electron transfer system supports the catalytic activity of several sterol biosynthetic enzymes. This is NADH-cytochrome b5 reductase 1 (CBR1) from Scheffersomyces stipitis (strain ATCC 58785 / CBS 6054 / NBRC 10063 / NRRL Y-11545) (Yeast).